We begin with the raw amino-acid sequence, 306 residues long: UDP-3-O-acyl-N-acetylglucosamine deacetylase (306 aa).

Positions 79, 238, and 242 each coordinate Zn(2+). The active-site Proton donor is the His-265.

It belongs to the LpxC family. Zn(2+) serves as cofactor.

The enzyme catalyses a UDP-3-O-[(3R)-3-hydroxyacyl]-N-acetyl-alpha-D-glucosamine + H2O = a UDP-3-O-[(3R)-3-hydroxyacyl]-alpha-D-glucosamine + acetate. It participates in glycolipid biosynthesis; lipid IV(A) biosynthesis; lipid IV(A) from (3R)-3-hydroxytetradecanoyl-[acyl-carrier-protein] and UDP-N-acetyl-alpha-D-glucosamine: step 2/6. Catalyzes the hydrolysis of UDP-3-O-myristoyl-N-acetylglucosamine to form UDP-3-O-myristoylglucosamine and acetate, the committed step in lipid A biosynthesis. This chain is UDP-3-O-acyl-N-acetylglucosamine deacetylase, found in Shewanella oneidensis (strain ATCC 700550 / JCM 31522 / CIP 106686 / LMG 19005 / NCIMB 14063 / MR-1).